Here is a 317-residue protein sequence, read N- to C-terminus: Beta-ketoacyl-[acyl-carrier-protein] synthase III (317 aa).

Catalysis depends on residues Cys112 and His244. The interval 245–249 is ACP-binding; sequence QANLR. Asn274 is a catalytic residue.

It belongs to the thiolase-like superfamily. FabH family. Homodimer.

It is found in the cytoplasm. The enzyme catalyses malonyl-[ACP] + acetyl-CoA + H(+) = 3-oxobutanoyl-[ACP] + CO2 + CoA. Its pathway is lipid metabolism; fatty acid biosynthesis. Its function is as follows. Catalyzes the condensation reaction of fatty acid synthesis by the addition to an acyl acceptor of two carbons from malonyl-ACP. Catalyzes the first condensation reaction which initiates fatty acid synthesis and may therefore play a role in governing the total rate of fatty acid production. Possesses both acetoacetyl-ACP synthase and acetyl transacylase activities. Its substrate specificity determines the biosynthesis of branched-chain and/or straight-chain of fatty acids. The protein is Beta-ketoacyl-[acyl-carrier-protein] synthase III of Blochmanniella pennsylvanica (strain BPEN).